The following is a 407-amino-acid chain: Histone-lysine N-methyltransferase SUV39H2 (407 aa).

The Chromo domain occupies 43–101 (YEVEYLCDYKVEEGKEYYLVKWKGWPESSNTWEPQKNLKCPKLLENFLSDKDEYLSRMK). Residues 185 to 243 (TGCECSDCPAEKCCPKEAGFILAYNKQKKLKIQPGLPIYECNSFCRCGPDCPNRIVQKG) form the Pre-SET domain. Zn(2+)-binding residues include Cys187, Cys189, Cys192, Cys197, Cys198, Cys225, Cys229, Cys231, and Cys235. The SET domain maps to 246–369 (YSLCIFRTNN…AGEELTFDYQ (124 aa)). S-adenosyl-L-methionine contacts are provided by residues 257 to 259 (RGW), Tyr300, and 326 to 327 (NH). Zn(2+)-binding residues include Cys329, Cys395, Cys397, and Cys402. The Post-SET domain occupies 391-407 (IRTVCKCGAVCCRGYLN).

This sequence belongs to the class V-like SAM-binding methyltransferase superfamily. Histone-lysine methyltransferase family. Suvar3-9 subfamily.

The protein resides in the nucleus. It localises to the chromosome. Its subcellular location is the centromere. It carries out the reaction L-lysyl(9)-[histone H3] + 3 S-adenosyl-L-methionine = N(6),N(6),N(6)-trimethyl-L-lysyl(9)-[histone H3] + 3 S-adenosyl-L-homocysteine + 3 H(+). Functionally, histone methyltransferase that specifically trimethylates 'Lys-9' of histone H3 using monomethylated H3 'Lys-9' as substrate. H3 'Lys-9' trimethylation represents a specific tag for epigenetic transcriptional repression by recruiting HP1 (CBX1, CBX3 and/or CBX5) proteins to methylated histones. Mainly functions in heterochromatin regions, thereby playing a central role in the establishment of constitutive heterochromatin at pericentric and telomere regions. H3 'Lys-9' trimethylation is also required to direct DNA methylation at pericentric repeats. SUV39H1 is targeted to histone H3 via its interaction with RB1 and is involved in many processes. This Gallus gallus (Chicken) protein is Histone-lysine N-methyltransferase SUV39H2 (SUV39H2).